Reading from the N-terminus, the 203-residue chain is Small ribosomal subunit protein uS4 (203 aa).

Residues 93 to 158 (LRLDNVVYRL…QQLVTRFLDL (66 aa)) form the S4 RNA-binding domain.

It belongs to the universal ribosomal protein uS4 family. In terms of assembly, part of the 30S ribosomal subunit. Contacts protein S5. The interaction surface between S4 and S5 is involved in control of translational fidelity.

In terms of biological role, one of the primary rRNA binding proteins, it binds directly to 16S rRNA where it nucleates assembly of the body of the 30S subunit. With S5 and S12 plays an important role in translational accuracy. The chain is Small ribosomal subunit protein uS4 from Akkermansia muciniphila (strain ATCC BAA-835 / DSM 22959 / JCM 33894 / BCRC 81048 / CCUG 64013 / CIP 107961 / Muc).